The sequence spans 74 residues: ATP synthase subunit c (74 aa).

A run of 2 helical transmembrane segments spans residues 8–28 (FIGIGLMAIGMYGAALGVSNI) and 52–72 (IGAGLAEAMGLFSFVIAMLLI).

The protein belongs to the ATPase C chain family. In terms of assembly, F-type ATPases have 2 components, F(1) - the catalytic core - and F(0) - the membrane proton channel. F(1) has five subunits: alpha(3), beta(3), gamma(1), delta(1), epsilon(1). F(0) has three main subunits: a(1), b(2) and c(10-14). The alpha and beta chains form an alternating ring which encloses part of the gamma chain. F(1) is attached to F(0) by a central stalk formed by the gamma and epsilon chains, while a peripheral stalk is formed by the delta and b chains.

Its subcellular location is the cell inner membrane. Functionally, f(1)F(0) ATP synthase produces ATP from ADP in the presence of a proton or sodium gradient. F-type ATPases consist of two structural domains, F(1) containing the extramembraneous catalytic core and F(0) containing the membrane proton channel, linked together by a central stalk and a peripheral stalk. During catalysis, ATP synthesis in the catalytic domain of F(1) is coupled via a rotary mechanism of the central stalk subunits to proton translocation. Key component of the F(0) channel; it plays a direct role in translocation across the membrane. A homomeric c-ring of between 10-14 subunits forms the central stalk rotor element with the F(1) delta and epsilon subunits. This is ATP synthase subunit c from Rickettsia felis (strain ATCC VR-1525 / URRWXCal2) (Rickettsia azadi).